An 81-amino-acid chain; its full sequence is Translational regulator CsrA (81 aa).

The protein belongs to the CsrA/RsmA family. In terms of assembly, homodimer; the beta-strands of each monomer intercalate to form a hydrophobic core, while the alpha-helices form wings that extend away from the core.

The protein localises to the cytoplasm. In terms of biological role, a translational regulator that binds mRNA to regulate translation initiation and/or mRNA stability. Usually binds in the 5'-UTR at or near the Shine-Dalgarno sequence preventing ribosome-binding, thus repressing translation. Its main target seems to be the major flagellin gene, while its function is anatagonized by FliW. This Borreliella burgdorferi (strain ATCC 35210 / DSM 4680 / CIP 102532 / B31) (Borrelia burgdorferi) protein is Translational regulator CsrA.